We begin with the raw amino-acid sequence, 268 residues long: Octanoyltransferase (268 aa).

The region spanning 73–261 (GEADELVWLL…AFEEVFGPAV (189 aa)) is the BPL/LPL catalytic domain. Substrate contacts are provided by residues 112 to 119 (RGGEYTYH), 192 to 194 (ALG), and 205 to 207 (GLS). The Acyl-thioester intermediate role is filled by cysteine 223.

It belongs to the LipB family.

It localises to the cytoplasm. The catalysed reaction is octanoyl-[ACP] + L-lysyl-[protein] = N(6)-octanoyl-L-lysyl-[protein] + holo-[ACP] + H(+). It participates in protein modification; protein lipoylation via endogenous pathway; protein N(6)-(lipoyl)lysine from octanoyl-[acyl-carrier-protein]: step 1/2. Catalyzes the transfer of endogenously produced octanoic acid from octanoyl-acyl-carrier-protein onto the lipoyl domains of lipoate-dependent enzymes. Lipoyl-ACP can also act as a substrate although octanoyl-ACP is likely to be the physiological substrate. The sequence is that of Octanoyltransferase from Agrobacterium fabrum (strain C58 / ATCC 33970) (Agrobacterium tumefaciens (strain C58)).